Reading from the N-terminus, the 129-residue chain is uncharacterized protein (129 aa).

Positions 44-63 (PYRAADRSNDQDNDRSGGNV) are disordered. Residues 46-58 (RAADRSNDQDNDR) are compositionally biased toward basic and acidic residues. A run of 2 helical transmembrane segments spans residues 78-98 (IISLFVLPVLLGAAGIIVGYI) and 109-129 (AWAMGIGVVSLVLGIFIIPFF).

The protein resides in the cell membrane. This is an uncharacterized protein from Bacillus subtilis (strain 168).